A 434-amino-acid chain; its full sequence is Serine--tRNA ligase (434 aa).

Position 237–239 (237–239 (TAE)) interacts with L-serine. 268–270 (RAE) lines the ATP pocket. Glutamate 291 contacts L-serine. Residue 358-361 (EISS) coordinates ATP. Serine 393 is a binding site for L-serine.

It belongs to the class-II aminoacyl-tRNA synthetase family. Type-1 seryl-tRNA synthetase subfamily. In terms of assembly, homodimer. The tRNA molecule binds across the dimer.

Its subcellular location is the cytoplasm. The catalysed reaction is tRNA(Ser) + L-serine + ATP = L-seryl-tRNA(Ser) + AMP + diphosphate + H(+). The enzyme catalyses tRNA(Sec) + L-serine + ATP = L-seryl-tRNA(Sec) + AMP + diphosphate + H(+). The protein operates within aminoacyl-tRNA biosynthesis; selenocysteinyl-tRNA(Sec) biosynthesis; L-seryl-tRNA(Sec) from L-serine and tRNA(Sec): step 1/1. In terms of biological role, catalyzes the attachment of serine to tRNA(Ser). Is also able to aminoacylate tRNA(Sec) with serine, to form the misacylated tRNA L-seryl-tRNA(Sec), which will be further converted into selenocysteinyl-tRNA(Sec). The protein is Serine--tRNA ligase of Rhodopseudomonas palustris (strain BisB5).